We begin with the raw amino-acid sequence, 1788 residues long: Protein TIC 214 (1788 aa).

6 consecutive transmembrane segments (helical) span residues 25 to 45 (IINS…FSIG), 70 to 90 (IGFI…PLHL), 95 to 115 (PHTI…WNNH), 132 to 152 (LNIQ…HFIL), 180 to 200 (VGWL…LFWI), and 223 to 243 (IFSI…PSPL). Disordered stretches follow at residues 248 to 297 (LKKT…EEKE) and 1482 to 1526 (DLEN…DFDR). 2 stretches are compositionally biased toward basic and acidic residues: residues 253–277 (KREE…EKGT) and 1513–1526 (PLKK…DFDR).

It belongs to the TIC214 family. As to quaternary structure, part of the Tic complex.

Its subcellular location is the plastid. The protein localises to the chloroplast inner membrane. Functionally, involved in protein precursor import into chloroplasts. May be part of an intermediate translocation complex acting as a protein-conducting channel at the inner envelope. The protein is Protein TIC 214 of Ranunculus macranthus (Large buttercup).